A 302-amino-acid chain; its full sequence is Probable 2-(5''-triphosphoribosyl)-3'-dephosphocoenzyme-A synthase (302 aa).

Belongs to the CitG/MdcB family.

It carries out the reaction 3'-dephospho-CoA + ATP = 2'-(5''-triphospho-alpha-D-ribosyl)-3'-dephospho-CoA + adenine. The protein is Probable 2-(5''-triphosphoribosyl)-3'-dephosphocoenzyme-A synthase of Citrobacter koseri (strain ATCC BAA-895 / CDC 4225-83 / SGSC4696).